The primary structure comprises 264 residues: Agamous-like MADS-box protein AGL61 (264 aa).

Positions 62–122 (IGRQKIPMVK…KKPFSFGHPS (61 aa)) constitute an MADS-box domain.

Interacts with PHE1/AGL37, PHE2/AGL38, AGL80 and AGL86. Forms a heterodimer with AGL80. As to expression, expressed exclusively in the central cell of the female gametophyte and in early endosperm.

Its subcellular location is the nucleus. Functionally, probable transcription factor. Controls central cell differentiation during female gametophyte development. The polypeptide is Agamous-like MADS-box protein AGL61 (AGL61) (Arabidopsis thaliana (Mouse-ear cress)).